Consider the following 37-residue polypeptide: Cytochrome b6-f complex subunit 5 (37 aa).

Residues 5–25 (LLSGIVLGLIPITLLGLFVTA) form a helical membrane-spanning segment.

This sequence belongs to the PetG family. As to quaternary structure, the 4 large subunits of the cytochrome b6-f complex are cytochrome b6, subunit IV (17 kDa polypeptide, PetD), cytochrome f and the Rieske protein, while the 4 small subunits are PetG, PetL, PetM and PetN. The complex functions as a dimer.

It is found in the plastid. The protein localises to the chloroplast thylakoid membrane. Component of the cytochrome b6-f complex, which mediates electron transfer between photosystem II (PSII) and photosystem I (PSI), cyclic electron flow around PSI, and state transitions. PetG is required for either the stability or assembly of the cytochrome b6-f complex. This is Cytochrome b6-f complex subunit 5 from Marchantia polymorpha (Common liverwort).